The primary structure comprises 343 residues: Aspartate beta-hydroxylase domain-containing protein 2 (343 aa).

Over 1–31 (MWLEWLVAWSWSLDGLRDCIATGIQSVRDCD) the chain is Cytoplasmic. Residues 32-52 (GTAVITVACLLVLFVWYCYHV) traverse the membrane as a helical segment. Topologically, residues 53 to 343 (GREQPRPHVS…ALDFIFAPGR (291 aa)) are lumenal. 2 N-linked (GlcNAc...) asparagine glycosylation sites follow: N77 and N185. 2-oxoglutarate-binding residues include W202 and S246. H257 lines the Fe cation pocket. 266–268 (RCH) provides a ligand contact to 2-oxoglutarate. Residue H302 participates in Fe cation binding. Residue R315 coordinates 2-oxoglutarate.

It belongs to the aspartyl/asparaginyl beta-hydroxylase family. Fe cation serves as cofactor.

The protein localises to the membrane. May function as 2-oxoglutarate-dependent dioxygenase. The protein is Aspartate beta-hydroxylase domain-containing protein 2 (Asphd2) of Rattus norvegicus (Rat).